A 495-amino-acid polypeptide reads, in one-letter code: Cytochrome P450 2B15 (495 aa).

Phosphoserine; by PKA is present on Ser-129. Cys-437 provides a ligand contact to heme.

It belongs to the cytochrome P450 family. The cofactor is heme.

It is found in the endoplasmic reticulum membrane. The protein resides in the microsome membrane. The catalysed reaction is an organic molecule + reduced [NADPH--hemoprotein reductase] + O2 = an alcohol + oxidized [NADPH--hemoprotein reductase] + H2O + H(+). Its function is as follows. Cytochromes P450 are a group of heme-thiolate monooxygenases. In liver microsomes, this enzyme is involved in an NADPH-dependent electron transport pathway. It oxidizes a variety of structurally unrelated compounds, including steroids, fatty acids, and xenobiotics. The polypeptide is Cytochrome P450 2B15 (Cyp2b15) (Rattus norvegicus (Rat)).